Consider the following 380-residue polypeptide: Lipid-A-disaccharide synthase (380 aa).

The protein belongs to the LpxB family.

The catalysed reaction is a lipid X + a UDP-2-N,3-O-bis[(3R)-3-hydroxyacyl]-alpha-D-glucosamine = a lipid A disaccharide + UDP + H(+). It participates in bacterial outer membrane biogenesis; LPS lipid A biosynthesis. Its function is as follows. Condensation of UDP-2,3-diacylglucosamine and 2,3-diacylglucosamine-1-phosphate to form lipid A disaccharide, a precursor of lipid A, a phosphorylated glycolipid that anchors the lipopolysaccharide to the outer membrane of the cell. In Francisella tularensis subsp. tularensis (strain FSC 198), this protein is Lipid-A-disaccharide synthase.